We begin with the raw amino-acid sequence, 174 residues long: Small ribosomal subunit protein uS5 (174 aa).

Positions 16–79 (FSELIVSVRR…NAAKKNMIRV (64 aa)) constitute an S5 DRBM domain.

Belongs to the universal ribosomal protein uS5 family. As to quaternary structure, part of the 30S ribosomal subunit. Contacts proteins S4 and S8.

With S4 and S12 plays an important role in translational accuracy. In terms of biological role, located at the back of the 30S subunit body where it stabilizes the conformation of the head with respect to the body. The sequence is that of Small ribosomal subunit protein uS5 from Ehrlichia canis (strain Jake).